Reading from the N-terminus, the 560-residue chain is Oxygen-dependent choline dehydrogenase (560 aa).

8 to 37 (DYIIIGAGSAGNVLATRLTEDADVSVLLLE) lines the FAD pocket. H475 (proton acceptor) is an active-site residue.

It belongs to the GMC oxidoreductase family. FAD serves as cofactor.

The catalysed reaction is choline + A = betaine aldehyde + AH2. The enzyme catalyses betaine aldehyde + NAD(+) + H2O = glycine betaine + NADH + 2 H(+). Its pathway is amine and polyamine biosynthesis; betaine biosynthesis via choline pathway; betaine aldehyde from choline (cytochrome c reductase route): step 1/1. Its function is as follows. Involved in the biosynthesis of the osmoprotectant glycine betaine. Catalyzes the oxidation of choline to betaine aldehyde and betaine aldehyde to glycine betaine at the same rate. The sequence is that of Oxygen-dependent choline dehydrogenase from Stenotrophomonas maltophilia (strain R551-3).